The sequence spans 237 residues: Neural retina-specific leucine zipper protein (237 aa).

Residues K20 and K24 each participate in a glycyl lysine isopeptide (Lys-Gly) (interchain with G-Cter in SUMO) cross-link. A disordered region spans residues 26-64; sequence EPSEGRSGVPTASLGSTPYSSVPPSPTFSEPGMVGGGEA. Residues 30 to 93 are minimal transactivation domain (MTD); that stretch reads GRSGVPTASL…SDEVLGLSPD (64 aa). A basic motif region spans residues 159 to 185; the sequence is RLKQRRRTLKNRGYAQACRSKRLQQRR. Residues 159–222 form the bZIP domain; it reads RLKQRRRTLK…DLYKARCDRL (64 aa). The leucine-zipper stretch occupies residues 187-208; the sequence is LEAERARLAAQLDALRAEVARL.

Belongs to the bZIP family. Interacts with FIZ1; this interaction represses transactivation. Interacts (via the leucine-zipper domain) with CRX. Disumoylated at Lys-20. Sumoylation modulates the transcriptional activity of NRL on RHO and NR2E3 promoters, and is required for normal rod differentiation. In terms of processing, phosphorylated. Expressed in the retina (at protein level).

The protein resides in the cytoplasm. The protein localises to the nucleus. In terms of biological role, acts as a transcriptional activator which regulates the expression of several rod-specific genes, including RHO and PDE6B. Also functions as a transcriptional coactivator, stimulating transcription mediated by the transcription factor CRX and NR2E3. Binds to the rhodopsin promoter in a sequence-specific manner. The protein is Neural retina-specific leucine zipper protein (Nrl) of Mus musculus (Mouse).